The sequence spans 254 residues: Translation initiation factor 2 subunit alpha (254 aa).

One can recognise an S1 motif domain in the interval 10–81 (GDLVVVKITE…ERKVVDLSLK (72 aa)).

This sequence belongs to the eIF-2-alpha family. Heterotrimer composed of an alpha, a beta and a gamma chain.

In terms of biological role, eIF-2 functions in the early steps of protein synthesis by forming a ternary complex with GTP and initiator tRNA. This Thermoplasma acidophilum (strain ATCC 25905 / DSM 1728 / JCM 9062 / NBRC 15155 / AMRC-C165) protein is Translation initiation factor 2 subunit alpha.